The sequence spans 147 residues: Small ribosomal subunit protein uS12 (147 aa).

Belongs to the universal ribosomal protein uS12 family. Part of the 30S ribosomal subunit.

Functionally, with S4 and S5 plays an important role in translational accuracy. Located at the interface of the 30S and 50S subunits. The chain is Small ribosomal subunit protein uS12 from Pyrococcus abyssi (strain GE5 / Orsay).